Here is a 337-residue protein sequence, read N- to C-terminus: D-alanine--D-alanine ligase (337 aa).

The 207-residue stretch at 124–330 (KMWFSALGIP…FTEYLSLVIN (207 aa)) folds into the ATP-grasp domain. ATP is bound at residue 154–209 (ALANWGSIFIKAASQGSSVGCYKVDDSSKVAQVLKDAFGYAPYVVVEKTIKARELE). 3 residues coordinate Mg(2+): Asp-284, Glu-297, and Asn-299.

The protein belongs to the D-alanine--D-alanine ligase family. Requires Mg(2+) as cofactor. The cofactor is Mn(2+).

Its subcellular location is the cytoplasm. The enzyme catalyses 2 D-alanine + ATP = D-alanyl-D-alanine + ADP + phosphate + H(+). The protein operates within cell wall biogenesis; peptidoglycan biosynthesis. In terms of biological role, cell wall formation. This chain is D-alanine--D-alanine ligase, found in Shewanella sp. (strain W3-18-1).